The sequence spans 538 residues: MRHVQAETSPSSEPEAGPSQPAVRQGALQGGLLMGYSPAGGATSPGVYQVSIFSPPAGASEPPRALKRPAPPTEGPRELKRGPGLGAREGLSPEEPPTVGLLGPEGLGLKLGVASQHFCHHGLCVVEQGGSSTSPWTSGARSSPLPPSNASCSTLHTRDWASPDPRGQGSLGSSLGPAPPGQLHTLDTDLHSLAQIGGKSLVSGVGNGGSPWPRESPGTANGCSPEHTPPGPGPPGPCPTKRRLLPAGEALDVSSEDEGPAPRRRRGTLGHPPAANSSDAKATPFWSHLLPGPKEPVLDPTDCNPMGRRLKGARRLKLSSLRSLRKGPGLLSPPSASPVPAPAVSRTLLGNFEESLLRGRFAPSGRIEGFTAEIGASGSYCPQHVTLPVTVTFFDVSEQNAPAPFLGVVDLSPLGRKGYSVPKVGTIQVTLFNPNQTVVKMFLVTFDFSDMPAAHMTFLRHRLFLVPVGEEGNAGPTRRLLCYLLHLRFRSSRSGRLSLHGDIRLLFSRRSLELDTGLPYELQAVTEAPHNPRYSPLP.

2 stretches are compositionally biased toward polar residues: residues 1–12 (MRHVQAETSPSS) and 129–141 (GGSS…SGAR). Disordered regions lie at residues 1–98 (MRHV…EPPT), 129–185 (GGSS…QLHT), and 201–303 (LVSG…PTDC). Residues 227–238 (HTPPGPGPPGPC) are compositionally biased toward pro residues. Phosphoserine is present on residues Ser254 and Ser255. Residues 348 to 430 (LLGNFEESLL…VPKVGTIQVT (83 aa)) form a required for macropage invasion region. The transactivation domain 1 (TAD1) stretch occupies residues 436–444 (QTVVKMFLV).

It belongs to the ATOS family.

It localises to the nucleus. Its function is as follows. Transcription regulator that may syncronize transcriptional and translational programs. In Bos taurus (Bovine), this protein is Atos homolog protein B.